Reading from the N-terminus, the 468-residue chain is Uronate isomerase (468 aa).

It belongs to the metallo-dependent hydrolases superfamily. Uronate isomerase family.

The catalysed reaction is D-glucuronate = D-fructuronate. The enzyme catalyses aldehydo-D-galacturonate = keto-D-tagaturonate. It functions in the pathway carbohydrate metabolism; pentose and glucuronate interconversion. The polypeptide is Uronate isomerase (Bacteroides fragilis (strain ATCC 25285 / DSM 2151 / CCUG 4856 / JCM 11019 / LMG 10263 / NCTC 9343 / Onslow / VPI 2553 / EN-2)).